The sequence spans 594 residues: MNKYRTHTCSELTIDSRGKDVVLSGWINKKRDHGNLLFIDLRDNYGMTQCIIDKSNQNFNSLEKIQLESVIKINGKVVERTKETINTDLQTGEIEVNINSFEVLGTCKELPMPVFSDQEYAEEIRLKYRFLDLRRKKIHDNIILRSKVISFIRSEMSKLGFLEFQTPILTSSSPEGARDFLVPSRLNPGKFYALPQAPQQFKQLIMVSGFDKYFQIAPCFRDEDARADRSPGEFYQLDLEMSFVEQEDVFQVVEKLIVNVFKKFSEKKLMYEKFPRIPYEESMLKYGSDKPDLRNPLIISDLSNIFIRDDVTFEIFKKLVKSGSKVRCIVTKNTKDKPRSFFDNIDKWAKEQGASGLAYFTIEKEENISARGPVGKFFSKEALEEIMKITGAEIGDSIFFACGKINDVEKITSLARDKIAKDLKLIDENTFAFCWVVDYPMFEKNEVTNKIEFSHNPFSMPQGDLKDIDFDNPLNIKAYQYDIVCNGIELSSGAIRNHVPELMYKLFSIAGYQKEQVDEKFSGMINALSYGAPPHGGIAPGIDRIVMLLANEKNIREVTMFPMNQNAQDLMMNAPSNVNEEQLKELGLALKLKK.

Glu175 is an L-aspartate binding site. Residues 199 to 202 (QQFK) form an aspartate region. Residues Arg221 and His455 each contribute to the L-aspartate site. Residue 221 to 223 (RDE) participates in ATP binding. Glu489 serves as a coordination point for ATP. Residue Arg496 participates in L-aspartate binding. Residue 541-544 (GIDR) participates in ATP binding.

This sequence belongs to the class-II aminoacyl-tRNA synthetase family. Type 1 subfamily. Homodimer.

The protein localises to the cytoplasm. It catalyses the reaction tRNA(Asx) + L-aspartate + ATP = L-aspartyl-tRNA(Asx) + AMP + diphosphate. Its function is as follows. Aspartyl-tRNA synthetase with relaxed tRNA specificity since it is able to aspartylate not only its cognate tRNA(Asp) but also tRNA(Asn). Reaction proceeds in two steps: L-aspartate is first activated by ATP to form Asp-AMP and then transferred to the acceptor end of tRNA(Asp/Asn). This chain is Aspartate--tRNA(Asp/Asn) ligase, found in Pelagibacter ubique (strain HTCC1062).